We begin with the raw amino-acid sequence, 328 residues long: D-cysteine desulfhydrase (328 aa).

Lysine 51 carries the N6-(pyridoxal phosphate)lysine modification.

Belongs to the ACC deaminase/D-cysteine desulfhydrase family. Homodimer. Pyridoxal 5'-phosphate is required as a cofactor.

It carries out the reaction D-cysteine + H2O = hydrogen sulfide + pyruvate + NH4(+) + H(+). Functionally, catalyzes the alpha,beta-elimination reaction of D-cysteine and of several D-cysteine derivatives. It could be a defense mechanism against D-cysteine. This Salmonella typhimurium (strain LT2 / SGSC1412 / ATCC 700720) protein is D-cysteine desulfhydrase.